A 224-amino-acid chain; its full sequence is Cytidylate kinase (224 aa).

11 to 19 (GPAAAGKST) lines the ATP pocket.

The protein belongs to the cytidylate kinase family. Type 1 subfamily.

It is found in the cytoplasm. The catalysed reaction is CMP + ATP = CDP + ADP. The enzyme catalyses dCMP + ATP = dCDP + ADP. In Bacillus subtilis (strain 168), this protein is Cytidylate kinase (cmk).